The chain runs to 260 residues: UPF0294 protein YE0917 (260 aa).

It belongs to the UPF0294 family.

It is found in the cytoplasm. The polypeptide is UPF0294 protein YE0917 (Yersinia enterocolitica serotype O:8 / biotype 1B (strain NCTC 13174 / 8081)).